Reading from the N-terminus, the 222-residue chain is Chorionic somatomammotropin hormone-like 1 (222 aa).

The N-terminal stretch at 1–26 (MAAGSRTSLLLAFALLCLPWLQEAGA) is a signal peptide. The Zn(2+) site is built by His-44 and Glu-205. A disulfide bridge connects residues Cys-213 and Cys-220.

The protein belongs to the somatotropin/prolactin family.

It is found in the secreted. May be a novel gestational hormone required to compensate for absence of other members of the GH/CS cluster during gestation. The protein is Chorionic somatomammotropin hormone-like 1 (CSHL1) of Homo sapiens (Human).